The following is a 172-amino-acid chain: uncharacterized protein (172 aa).

Positions 1–28 are enriched in low complexity; it reads MAAAGVTAKAGGGTSAAAASLIRARSPA. The segment at 1–172 is disordered; the sequence is MAAAGVTAKA…GGRRSGRDAG (172 aa). Residues 58-68 show a composition bias toward basic residues; that stretch reads PRRRSRARRGH. A compositionally biased stretch (gly residues) spans 80 to 100; sequence TVGGEGQASQIGGGGGGGGGR. Over residues 129–138 the composition is skewed to low complexity; it reads PGLASSPGVA. A compositionally biased stretch (gly residues) spans 139-165; that stretch reads PAGGSGGLWSGAGLCSGLGARGFPGGR.

This is an uncharacterized protein from Homo sapiens (Human).